The sequence spans 587 residues: Serine/threonine-protein phosphatase 2A 65 kDa regulatory subunit A beta isoform (587 aa).

S2 carries the post-translational modification N-acetylserine. HEAT repeat units follow at residues 2–42 (SMID…ALGE), 44–80 (RTRKELIPFLSENNDDDDEVLLAMAEELGVFIPYVGG), 81–119 (VEYAHVLLPPLETLSTVEETCVREKAVESLCRVGSQMRE), 158–196 (DMLKTELRSLYTQLCQDDMPMVRRAAATNLGKFAATVES), 197–235 (AHLKTDVMSMFEDLTQDDQDSVRLLAVEGCAALGKLLEP), 236–274 (QDCVQHILPVIVNFSQDKSWRVRYMVANQLYELCEAVGP), 275–313 (EPTRTELVPAYVRLLRDNEAEVRIAAAGKVTKFCRILNP), 315–352 (IAIQHILPCVKELSSDSSQHVRSALASVIMGMAPVLGK), 353–391 (DATIEHLLPIFLSLLKDEFPDVRLNIISKLDQVNQVIGI), 393–430 (LLSQSLLPAIVELAEDRHWRVRLAIIEYIPLLASQLGV), 432–469 (FFDDKLGALCMQWLQDKVHSIRDAAANNLKRLAEEFGP), 470–508 (EWAMQHIVPQVLEMVNNPHYLYRMTILRAVSLLAPVMGS), 509–547 (EITCSKLLPVVMTASKDRVPNIKFNVAKVLQSLIPIVDQ), and 549–586 (VVEKTIRPGLVELSEDPDVDVRFFANQALQSIDNVMMS).

This sequence belongs to the phosphatase 2A regulatory subunit A family. In terms of assembly, PP2A consists of a common heterodimeric core enzyme, composed of a 36 kDa catalytic subunit (subunit C) and a 65 kDa constant regulatory subunit (subunit A), that associates with a variety of regulatory subunits such as subunits B (the R2/B/PR55/B55, R3/B''/PR72/PR130/PR59 and R5/B'/B56 families). Interacts with B'THETA. Interacts with SRK2E/OST1. Interacts with SIC/RON3. Ubiquitous, with higher levels in roots and flowers (at protein level).

The protein localises to the cytoplasm. It is found in the cytosol. Its subcellular location is the nucleus. The protein resides in the peroxisome. The A subunit of protein phosphatase 2A serves as a scaffolding molecule to coordinate the assembly of the catalytic subunit and a variable regulatory B subunit. Involved during developmental process such as seedling and floral developments. Seems to act as a negative regulator of PP2A catalytic activity. Associates with the serine/threonine-protein phosphatase PP2A catalytic subunit C and regulatory subunit B' to positively regulates beta-oxidation of fatty acids and protoauxins in peroxisomes by dephosphorylating peroxisomal beta-oxidation-related proteins. In Arabidopsis thaliana (Mouse-ear cress), this protein is Serine/threonine-protein phosphatase 2A 65 kDa regulatory subunit A beta isoform (PP2AA2).